Reading from the N-terminus, the 1028-residue chain is Carbamoyl phosphate synthase large chain (1028 aa).

Positions methionine 1 to glutamate 409 are carboxyphosphate synthetic domain. Positions 129, 169, 175, 176, 208, 210, 215, 241, 242, 243, 285, and 299 each coordinate ATP. The region spanning glutamine 133 to valine 328 is the ATP-grasp 1 domain. Glutamine 285, glutamate 299, and asparagine 301 together coordinate Mg(2+). The Mn(2+) site is built by glutamine 285, glutamate 299, and asparagine 301. The tract at residues arginine 410–valine 549 is oligomerization domain. The tract at residues tryptophan 550 to glycine 933 is carbamoyl phosphate synthetic domain. The ATP-grasp 2 domain occupies histidine 674–valine 866. Residues arginine 710, arginine 750, leucine 752, glutamate 757, glycine 782, valine 783, histidine 784, serine 785, glutamine 825, and glutamate 837 each contribute to the ATP site. The Mg(2+) site is built by glutamine 825, glutamate 837, and asparagine 839. The Mn(2+) site is built by glutamine 825, glutamate 837, and asparagine 839. The region spanning glutamine 934–glycine 1028 is the MGS-like domain. Positions glutamine 934 to glycine 1028 are allosteric domain.

The protein belongs to the CarB family. In terms of assembly, composed of two chains; the small (or glutamine) chain promotes the hydrolysis of glutamine to ammonia, which is used by the large (or ammonia) chain to synthesize carbamoyl phosphate. Tetramer of heterodimers (alpha,beta)4. The cofactor is Mg(2+). It depends on Mn(2+) as a cofactor.

The catalysed reaction is hydrogencarbonate + L-glutamine + 2 ATP + H2O = carbamoyl phosphate + L-glutamate + 2 ADP + phosphate + 2 H(+). The enzyme catalyses hydrogencarbonate + NH4(+) + 2 ATP = carbamoyl phosphate + 2 ADP + phosphate + 2 H(+). It functions in the pathway amino-acid biosynthesis; L-arginine biosynthesis; carbamoyl phosphate from bicarbonate: step 1/1. The protein operates within pyrimidine metabolism; UMP biosynthesis via de novo pathway; (S)-dihydroorotate from bicarbonate: step 1/3. Functionally, large subunit of the glutamine-dependent carbamoyl phosphate synthetase (CPSase). CPSase catalyzes the formation of carbamoyl phosphate from the ammonia moiety of glutamine, carbonate, and phosphate donated by ATP, constituting the first step of 2 biosynthetic pathways, one leading to arginine and/or urea and the other to pyrimidine nucleotides. The large subunit (synthetase) binds the substrates ammonia (free or transferred from glutamine from the small subunit), hydrogencarbonate and ATP and carries out an ATP-coupled ligase reaction, activating hydrogencarbonate by forming carboxy phosphate which reacts with ammonia to form carbamoyl phosphate. In Thermus thermophilus (strain ATCC 27634 / DSM 579 / HB8), this protein is Carbamoyl phosphate synthase large chain.